We begin with the raw amino-acid sequence, 66 residues long: MRIISKRRAMTIYRQHPESRIFRYCTGKYQWHGSVCHYTGRDVPDITGVLAVYAERRRTAADRMLD.

Belongs to the YeeT/YkfH/YpjJ family.

This is an uncharacterized protein from Escherichia coli (strain K12).